The sequence spans 136 residues: Histone H3 (136 aa).

Residues 1-43 form a disordered region; it reads MARTKQTARKSTGGKAPRKQLASKAARKAAPSTGGVKKPHRYK. K5 bears the N6,N6,N6-trimethyllysine; alternate mark. N6,N6-dimethyllysine; alternate is present on K5. 2 positions are modified to N6-methyllysine; alternate: K5 and K10. At K10 the chain carries N6-acetyllysine; alternate. Residue S11 is modified to Phosphoserine. Residue K15 is modified to N6,N6-dimethyllysine; alternate. N6-acetyllysine; alternate is present on residues K15, K19, K24, K28, and K37. 4 positions are modified to N6-methyllysine; alternate: K19, K24, K28, and K37. An N6,N6,N6-trimethyllysine; alternate mark is found at K28 and K37. An N6,N6-dimethyllysine; alternate mark is found at K28 and K37. K57 and K65 each carry N6-acetyllysine. K80 is subject to N6,N6,N6-trimethyllysine; alternate. Residue K80 is modified to N6,N6-dimethyllysine; alternate. K80 carries the N6-methyllysine; alternate modification.

This sequence belongs to the histone H3 family. The nucleosome is a histone octamer containing two molecules each of H2A, H2B, H3 and H4 assembled in one H3-H4 heterotetramer and two H2A-H2B heterodimers. The octamer wraps approximately 147 bp of DNA. Phosphorylated to form H3S10ph. H3S10ph promotes subsequent H3K14ac formation and is required for transcriptional activation through TBP recruitment to the promoters. In terms of processing, mono-, di- and trimethylated by the COMPASS complex to form H3K4me1/2/3. H3K4me activates gene expression by regulating transcription elongation and plays a role in telomere length maintenance. H3K4me enrichment correlates with transcription levels, and occurs in a 5' to 3' gradient with H3K4me3 enrichment at the 5'-end of genes, shifting to H3K4me2 and then H3K4me1. Methylated by set2 to form H3K36me. H3K36me represses gene expression. Methylated by dot1 to form H3K79me. H3K79me is required for association of SIR proteins with telomeric regions and for telomeric silencing. The COMPASS-mediated formation of H3K4me2/3 and the dot1-mediated formation of H3K79me require H2BK123ub1. Post-translationally, acetylation of histone H3 leads to transcriptional activation. H3K14ac formation by gcn5 is promoted by H3S10ph. H3K14ac can also be formed by esa1. H3K56ac formation occurs predominantly in newly synthesized H3 molecules during G1, S and G2/M of the cell cycle and may be involved in DNA repair.

It localises to the nucleus. It is found in the chromosome. Functionally, core component of nucleosome. Nucleosomes wrap and compact DNA into chromatin, limiting DNA accessibility to the cellular machineries which require DNA as a template. Histones thereby play a central role in transcription regulation, DNA repair, DNA replication and chromosomal stability. DNA accessibility is regulated via a complex set of post-translational modifications of histones, also called histone code, and nucleosome remodeling. The chain is Histone H3 (hht1) from Neosartorya fischeri (strain ATCC 1020 / DSM 3700 / CBS 544.65 / FGSC A1164 / JCM 1740 / NRRL 181 / WB 181) (Aspergillus fischerianus).